Consider the following 293-residue polypeptide: Elongation factor Ts (293 aa).

The involved in Mg(2+) ion dislocation from EF-Tu stretch occupies residues 81–84; the sequence is TDFV.

The protein belongs to the EF-Ts family.

The protein localises to the cytoplasm. Associates with the EF-Tu.GDP complex and induces the exchange of GDP to GTP. It remains bound to the aminoacyl-tRNA.EF-Tu.GTP complex up to the GTP hydrolysis stage on the ribosome. This Methylococcus capsulatus (strain ATCC 33009 / NCIMB 11132 / Bath) protein is Elongation factor Ts.